The primary structure comprises 262 residues: Proliferating cell nuclear antigen (262 aa).

A DNA-binding region spans residues 61-80; that stretch reads RCDRNIAMGVNLNSMSKILK. K164 participates in a covalent cross-link: Glycyl lysine isopeptide (Lys-Gly) (interchain with G-Cter in ubiquitin).

It belongs to the PCNA family. In terms of assembly, homotrimer. Forms a complex with activator 1 heteropentamer in the presence of ATP. Component of the replisome complex. Monoubiquitinated by the UBE2B-RAD18 complex on Lys-164. Monoubiquitination at Lys-164 also takes place in undamaged proliferating cells, and is mediated by the DCX(DTL) complex, leading to enhance PCNA-dependent translesion DNA synthesis.

Its subcellular location is the nucleus. Functionally, this protein is an auxiliary protein of DNA polymerase delta and is involved in the control of eukaryotic DNA replication by increasing the polymerase's processibility during elongation of the leading strand. The protein is Proliferating cell nuclear antigen (PCNA) of Coturnix japonica (Japanese quail).